A 174-amino-acid polypeptide reads, in one-letter code: Peptide deformylase (174 aa).

Residues Cys98 and His140 each contribute to the Fe cation site. Glu141 is an active-site residue. Position 144 (His144) interacts with Fe cation.

It belongs to the polypeptide deformylase family. It depends on Fe(2+) as a cofactor.

The catalysed reaction is N-terminal N-formyl-L-methionyl-[peptide] + H2O = N-terminal L-methionyl-[peptide] + formate. Its function is as follows. Removes the formyl group from the N-terminal Met of newly synthesized proteins. Requires at least a dipeptide for an efficient rate of reaction. N-terminal L-methionine is a prerequisite for activity but the enzyme has broad specificity at other positions. This Bradyrhizobium diazoefficiens (strain JCM 10833 / BCRC 13528 / IAM 13628 / NBRC 14792 / USDA 110) protein is Peptide deformylase.